A 351-amino-acid chain; its full sequence is Small ribosomal subunit biogenesis GTPase RsgA 1 (351 aa).

The CP-type G domain maps to 100-258 (LRTDAQIVAS…IIDTPGMREL (159 aa)). Residues 148 to 151 (SKVD) and 200 to 208 (GSSGAGKST) each bind GTP. Cys282, Cys287, His289, and Cys295 together coordinate Zn(2+).

It belongs to the TRAFAC class YlqF/YawG GTPase family. RsgA subfamily. As to quaternary structure, monomer. Associates with 30S ribosomal subunit, binds 16S rRNA. The cofactor is Zn(2+).

It is found in the cytoplasm. Its function is as follows. One of several proteins that assist in the late maturation steps of the functional core of the 30S ribosomal subunit. Helps release RbfA from mature subunits. May play a role in the assembly of ribosomal proteins into the subunit. Circularly permuted GTPase that catalyzes slow GTP hydrolysis, GTPase activity is stimulated by the 30S ribosomal subunit. This Oceanobacillus iheyensis (strain DSM 14371 / CIP 107618 / JCM 11309 / KCTC 3954 / HTE831) protein is Small ribosomal subunit biogenesis GTPase RsgA 1.